Consider the following 92-residue polypeptide: Large ribosomal subunit protein bL25 (92 aa).

Belongs to the bacterial ribosomal protein bL25 family. Part of the 50S ribosomal subunit; part of the 5S rRNA/L5/L18/L25 subcomplex. Contacts the 5S rRNA. Binds to the 5S rRNA independently of L5 and L18.

Functionally, this is one of the proteins that binds to the 5S RNA in the ribosome where it forms part of the central protuberance. In Aliivibrio salmonicida (strain LFI1238) (Vibrio salmonicida (strain LFI1238)), this protein is Large ribosomal subunit protein bL25.